A 372-amino-acid polypeptide reads, in one-letter code: Aminomethyltransferase (372 aa).

The protein belongs to the GcvT family. In terms of assembly, the glycine cleavage system is composed of four proteins: P, T, L and H.

The enzyme catalyses N(6)-[(R)-S(8)-aminomethyldihydrolipoyl]-L-lysyl-[protein] + (6S)-5,6,7,8-tetrahydrofolate = N(6)-[(R)-dihydrolipoyl]-L-lysyl-[protein] + (6R)-5,10-methylene-5,6,7,8-tetrahydrofolate + NH4(+). The glycine cleavage system catalyzes the degradation of glycine. The sequence is that of Aminomethyltransferase from Burkholderia orbicola (strain MC0-3).